Reading from the N-terminus, the 528-residue chain is ATP synthase subunit alpha 1 (528 aa).

Residue 177–184 participates in ATP binding; the sequence is GDRQTGKT.

The protein belongs to the ATPase alpha/beta chains family. In terms of assembly, F-type ATPases have 2 components, CF(1) - the catalytic core - and CF(0) - the membrane proton channel. CF(1) has five subunits: alpha(3), beta(3), gamma(1), delta(1), epsilon(1). CF(0) has three main subunits: a(1), b(2) and c(9-12). The alpha and beta chains form an alternating ring which encloses part of the gamma chain. CF(1) is attached to CF(0) by a central stalk formed by the gamma and epsilon chains, while a peripheral stalk is formed by the delta and b chains.

The protein localises to the cell inner membrane. The catalysed reaction is ATP + H2O + 4 H(+)(in) = ADP + phosphate + 5 H(+)(out). Functionally, produces ATP from ADP in the presence of a proton gradient across the membrane. The alpha chain is a regulatory subunit. This Pseudoalteromonas atlantica (strain T6c / ATCC BAA-1087) protein is ATP synthase subunit alpha 1.